The sequence spans 207 residues: MMKPHNLFQFLAVCSLTVAVASAQAGAVDALKQFNNDADGISGSFTQTVQSKKKTQTAHGTFKILRPGLFKWEYTLPYRQTIVGDGQTVWLYDVDLAQVTKSSQDQAIGGSPAAILSNKTALESSYTLKEDGSSNGIDYVRATPKRNNAGYQYIRIGFKGGNLAAMQLKDSFGNQTSISFGGLNTNPQLSRGAFKFTPPKGVDVLSN.

Residues 1-23 (MMKPHNLFQFLAVCSLTVAVASA) form the signal peptide.

Belongs to the LolA family. Monomer.

Its subcellular location is the periplasm. Participates in the translocation of lipoproteins from the inner membrane to the outer membrane. Only forms a complex with a lipoprotein if the residue after the N-terminal Cys is not an aspartate (The Asp acts as a targeting signal to indicate that the lipoprotein should stay in the inner membrane). In Neisseria gonorrhoeae (strain ATCC 700825 / FA 1090), this protein is Outer-membrane lipoprotein carrier protein.